Consider the following 321-residue polypeptide: Solute carrier family 25 member 33 (321 aa).

3 Solcar repeats span residues 9-118, 126-213, and 231-315; these read ENTL…AKEQ, NSNI…LKKY, and TNFF…IVYL. 6 helical membrane passes run 12 to 32, 49 to 65, 121 to 141, 190 to 210, 233 to 253, and 298 to 318; these read LLHL…TCPL, VYYP…AGVV, GVFV…AAFV, LTAS…YESL, FFGL…VAYP, and QIPN…LLED.

The protein belongs to the mitochondrial carrier (TC 2.A.29) family.

The protein resides in the mitochondrion inner membrane. The enzyme catalyses UTP(in) + UDP(out) = UTP(out) + UDP(in). It carries out the reaction dUTP(out) + UTP(in) = dUTP(in) + UTP(out). The catalysed reaction is 5-methyl-UTP(out) + UTP(in) = 5-methyl-UTP(in) + UTP(out). It catalyses the reaction 5-methyl-UDP(out) + UTP(in) = 5-methyl-UDP(in) + UTP(out). The enzyme catalyses UTP(in) + CTP(out) = UTP(out) + CTP(in). It carries out the reaction CDP(out) + UTP(in) = CDP(in) + UTP(out). The catalysed reaction is dCTP(out) + UTP(in) = dCTP(in) + UTP(out). It catalyses the reaction dCDP(out) + UTP(in) = dCDP(in) + UTP(out). The enzyme catalyses UTP(in) + GTP(out) = UTP(out) + GTP(in). It carries out the reaction UTP(in) + GDP(out) = UTP(out) + GDP(in). The catalysed reaction is dGTP(out) + UTP(in) = dGTP(in) + UTP(out). It catalyses the reaction dGDP(out) + UTP(in) = dGDP(in) + UTP(out). The enzyme catalyses ITP(out) + UTP(in) = ITP(in) + UTP(out). Functionally, mitochondrial transporter that imports/exports pyrimidine nucleotides into and from mitochondria. Selectively transports uridine, thymidine, guanosine, cytosine and inosine (deoxy)nucleoside di- and triphosphates by an antiport mechanism. May import (deoxy)nucleoside triphosphates in exchange for intramitochondrial (deoxy)nucleoside diphosphates, thus providing precursors necessary for de novo synthesis of mitochondrial DNA and RNA while exporting products of their catabolism. Participates in mitochondrial genome maintenance, regulation of mitochondrial membrane potential and mitochondrial respiration. Upon INS or IGF1 stimulation regulates cell growth and proliferation by controlling mitochondrial DNA replication and transcription, the ratio of mitochondria-to nuclear-encoded components of the electron transport chain resulting in control of mitochondrial ROS production. Participates in dendritic cell endocytosis and may associate with mitochondrial oxidative phosphorylation. In Bos taurus (Bovine), this protein is Solute carrier family 25 member 33 (SLC25A33).